A 248-amino-acid chain; its full sequence is Probable cyclic nucleotide phosphodiesterase CBUA0032 (248 aa).

Fe cation-binding residues include Asp13, His15, Asp52, Asn82, His152, His191, and His193. Residues His15, Asp52, and 82-83 (NH) contribute to the AMP site. His193 lines the AMP pocket.

This sequence belongs to the cyclic nucleotide phosphodiesterase class-III family. It depends on Fe(2+) as a cofactor.

This is Probable cyclic nucleotide phosphodiesterase CBUA0032 from Coxiella burnetii (strain RSA 493 / Nine Mile phase I).